Here is a 191-residue protein sequence, read N- to C-terminus: Oleosin 20.3 kDa (191 aa).

Alanine 2 is subject to N-acetylalanine. The segment at 2-54 (ANVDRDRRVHVDRTDKRVHQPNYEDDVGFGGYGGYGAGSDYKSRGPSTNQILA) is polar. Helical transmembrane passes span 52–72 (ILAL…AGLT) and 99–119 (LTIG…LTGL). Residues 55-128 (LIAGVPIGGT…LSSVSWVLNY (74 aa)) are hydrophobic.

It belongs to the oleosin family.

The protein resides in the lipid droplet. The protein localises to the membrane. Functionally, may have a structural role to stabilize the lipid body during desiccation of the seed by preventing coalescence of the oil. Probably interacts with both lipid and phospholipid moieties of lipid bodies. May also provide recognition signals for specific lipase anchorage in lipolysis during seedling growth. This Arabidopsis thaliana (Mouse-ear cress) protein is Oleosin 20.3 kDa (OL2).